The following is a 360-amino-acid chain: Viral protein TPX (360 aa).

The interval 269–289 (TVTPISSPSPTPTPTPTPTPT) is disordered. Residues 270–291 (VTPISSPSPTPTPTPTPTPTPT) form a Thr-Pro(N) repeat. The segment covering 275 to 289 (SPSPTPTPTPTPTPT) has biased composition (pro residues). A 3 Thr-Pro repeats regions and two near identical repeats region spans residues 278-353 (PTPTPTPTPT…PTPTPTPTPT (76 aa)). The segment at residues 292–301 (YDITYVVFDV) is a repeat. A Thr-Pro(N) repeat occupies 302–322 (TPSPTPTPTLTSTPTPTPTPT). Positions 323 to 332 (YDITYVIFDV) form a repeat. The disordered stretch occupies residues 332–360 (VTPSPTPTPTPTPTPTPTPTPTSTTSSNI). The Thr-Pro(N) repeat unit spans residues 333 to 353 (TPSPTPTPTPTPTPTPTPTPT). Residues 335–351 (SPTPTPTPTPTPTPTPT) are compositionally biased toward pro residues.

The sequence is that of Viral protein TPX from Thermoproteus tenax (TTV1).